The primary structure comprises 428 residues: Adenylosuccinate synthetase (428 aa).

GTP contacts are provided by residues 12-18 (GDEGKGK) and 40-42 (GHT). Aspartate 13 (proton acceptor) is an active-site residue. Positions 13 and 40 each coordinate Mg(2+). Residues 13 to 16 (DEGK), 38 to 41 (NAGH), threonine 129, arginine 143, glutamine 224, threonine 239, and arginine 303 contribute to the IMP site. The active-site Proton donor is the histidine 41. 299-305 (VTTGRIR) provides a ligand contact to substrate. GTP-binding positions include arginine 305, 331-333 (KVD), and 410-412 (AYG).

The protein belongs to the adenylosuccinate synthetase family. In terms of assembly, homodimer. Mg(2+) serves as cofactor.

Its subcellular location is the cytoplasm. It catalyses the reaction IMP + L-aspartate + GTP = N(6)-(1,2-dicarboxyethyl)-AMP + GDP + phosphate + 2 H(+). Its pathway is purine metabolism; AMP biosynthesis via de novo pathway; AMP from IMP: step 1/2. In terms of biological role, plays an important role in the de novo pathway of purine nucleotide biosynthesis. Catalyzes the first committed step in the biosynthesis of AMP from IMP. The polypeptide is Adenylosuccinate synthetase (Francisella tularensis subsp. holarctica (strain FTNF002-00 / FTA)).